Consider the following 463-residue polypeptide: Glutamate--tRNA ligase 1 (463 aa).

The 'HIGH' region motif lies at 11-21 (PSPTGYLHIGG). The short motif at 240–244 (KLSKR) is the 'KMSKS' region element. Residue lysine 243 coordinates ATP.

The protein belongs to the class-I aminoacyl-tRNA synthetase family. Glutamate--tRNA ligase type 1 subfamily. As to quaternary structure, monomer.

Its subcellular location is the cytoplasm. The enzyme catalyses tRNA(Glu) + L-glutamate + ATP = L-glutamyl-tRNA(Glu) + AMP + diphosphate. In terms of biological role, catalyzes the attachment of glutamate to tRNA(Glu) in a two-step reaction: glutamate is first activated by ATP to form Glu-AMP and then transferred to the acceptor end of tRNA(Glu). This Campylobacter jejuni subsp. doylei (strain ATCC BAA-1458 / RM4099 / 269.97) protein is Glutamate--tRNA ligase 1.